The following is a 246-amino-acid chain: MEISLLTDVGQKRTNNQDYVNHYVNRAGRTMIILADGMGGHRAGNIASEMAVTDLGVAWVDTQIDTVNEVREWFAHYLEIENQKIHQLGQDEAYRGMGTTLEVLAIIDNQAIYAHIGDSRIGLIRGEEYHQLTSDHSLVNELLKAGQLTPEEAEAHPQKNIITQSIGQKDEIQPDFGTVILESGDYLLLNSDGLTNMISGSEIRDIVTSDIPLADKTETLVRFANNAGGLDNITVALVSMNEEDAE.

A PPM-type phosphatase domain is found at Glu-2–Met-240. Mn(2+) contacts are provided by Asp-36, Gly-37, Asp-192, and Asp-231.

Belongs to the PP2C family. Mn(2+) is required as a cofactor.

It localises to the cytoplasm. It carries out the reaction O-phospho-L-seryl-[protein] + H2O = L-seryl-[protein] + phosphate. The catalysed reaction is O-phospho-L-threonyl-[protein] + H2O = L-threonyl-[protein] + phosphate. Its function is as follows. Protein phosphatase able to dephosphorylate StkP-P and other phosphorylated protein substrates. PhpP and its cognate protein kinase StkP appear to constitute a functional signaling couple in vivo, PhpP's primary role being probably to control phosphorylation levels of StkP and of its targets. PhpP thus performs an essential control of StkP activity. Also dephosphorylates DivIVA in vivo. The polypeptide is Protein phosphatase PhpP (phpP) (Streptococcus pneumoniae serotype 2 (strain D39 / NCTC 7466)).